The following is a 433-amino-acid chain: Protein RETICULATA-RELATED 1, chloroplastic (433 aa).

The N-terminal 63 residues, 1 to 63 (MSISLKISHI…LSSRNLRNRC (63 aa)), are a transit peptide targeting the chloroplast. At V64 the chain carries N-acetylvaline. Residues 93–105 (DLEPELDDGDGGD) show a composition bias toward acidic residues. The segment at 93 to 143 (DLEPELDDGDGGDENGNNDGGGNGGNGDGGGGGGDGEGDDGEDEADKAEEK) is disordered. The segment covering 110-127 (NDGGGNGGNGDGGGGGGD) has biased composition (gly residues). Over residues 128-139 (GEGDDGEDEADK) the composition is skewed to acidic residues. Transmembrane regions (helical) follow at residues 249-269 (LYAA…GLLA) and 323-343 (LLYG…ANLI).

This sequence belongs to the RETICULATA family. Expressed in root vasculature, distal region of young leaf primordia, leaf bundle sheath cells, hydathodes and pollen grains.

The protein localises to the plastid. Its subcellular location is the chloroplast membrane. Functionally, may play a role in leaf development. The polypeptide is Protein RETICULATA-RELATED 1, chloroplastic (Arabidopsis thaliana (Mouse-ear cress)).